We begin with the raw amino-acid sequence, 303 residues long: Recombination-associated protein RdgC (303 aa).

It belongs to the RdgC family.

It is found in the cytoplasm. Its subcellular location is the nucleoid. Functionally, may be involved in recombination. This chain is Recombination-associated protein RdgC, found in Shewanella halifaxensis (strain HAW-EB4).